The sequence spans 182 residues: Large ribosomal subunit protein uL16 (182 aa).

It belongs to the universal ribosomal protein uL16 family.

This chain is Large ribosomal subunit protein uL16, found in Thermococcus onnurineus (strain NA1).